Consider the following 185-residue polypeptide: MISTSDFKNGTNILVDGEPYQIAWFQNHKPGKGGAVMRVKLRHLKKGGIIERTFKSGEKFKALTITRQKKRFLYKESNNFNFMDMDTYEQITVHPELLGKMVNFLKENLEVEAIYLENELIGIDLPVIIEMTIAEAEHGIKGDSVSNTTKTAKLETGADIHVPLFIKEGDRIKVDTRTGEYVERA.

Belongs to the elongation factor P family.

It localises to the cytoplasm. The protein operates within protein biosynthesis; polypeptide chain elongation. Its function is as follows. Involved in peptide bond synthesis. Stimulates efficient translation and peptide-bond synthesis on native or reconstituted 70S ribosomes in vitro. Probably functions indirectly by altering the affinity of the ribosome for aminoacyl-tRNA, thus increasing their reactivity as acceptors for peptidyl transferase. The chain is Elongation factor P from Endomicrobium trichonymphae.